The chain runs to 361 residues: Glutaminyl-peptide cyclotransferase (361 aa).

Positions 1–28 are cleaved as a signal peptide; it reads MAGCRDPRVVDTLHLLLLVAVLPLAVSG. Asparagine 49 carries an N-linked (GlcNAc...) asparagine glycan. The cysteines at positions 139 and 164 are disulfide-linked. Aspartate 159 contacts Zn(2+). Asparagine 183 carries an N-linked (GlcNAc...) asparagine glycan. Glutamate 201 acts as the Proton acceptor in catalysis. Glutamate 202 contributes to the Zn(2+) binding site. Aspartate 248 serves as the catalytic Proton acceptor. Histidine 330 provides a ligand contact to Zn(2+).

Belongs to the glutaminyl-peptide cyclotransferase family. As to expression, expressed mainly in brain tissue.

It is found in the secreted. It carries out the reaction N-terminal L-glutaminyl-[peptide] = N-terminal 5-oxo-L-prolyl-[peptide] + NH4(+). Responsible for the biosynthesis of pyroglutamyl peptides. Has a bias against acidic and tryptophan residues adjacent to the N-terminal glutaminyl residue and a lack of importance of chain length after the second residue. Also catalyzes N-terminal pyroglutamate formation. This Bos taurus (Bovine) protein is Glutaminyl-peptide cyclotransferase (QPCT).